We begin with the raw amino-acid sequence, 754 residues long: Probable beta-glucosidase D (754 aa).

A signal peptide spans 1-20 (MKVLSFIVAAALLGLTGASS). 3 N-linked (GlcNAc...) asparagine glycosylation sites follow: Asn-66, Asn-69, and Asn-186. Residues 186–206 (NRTGGGGGGGGDSGSAPYSSN) form a disordered region. The span at 188–198 (TGGGGGGGGDS) shows a compositional bias: gly residues. Asn-239 carries N-linked (GlcNAc...) asparagine glycosylation. Residue Asp-267 is part of the active site. 9 N-linked (GlcNAc...) asparagine glycosylation sites follow: Asn-301, Asn-345, Asn-443, Asn-512, Asn-534, Asn-573, Asn-588, Asn-655, and Asn-745.

It belongs to the glycosyl hydrolase 3 family.

Its subcellular location is the secreted. It carries out the reaction Hydrolysis of terminal, non-reducing beta-D-glucosyl residues with release of beta-D-glucose.. The protein operates within glycan metabolism; cellulose degradation. Its function is as follows. Beta-glucosidases are one of a number of cellulolytic enzymes involved in the degradation of cellulosic biomass. Catalyzes the last step releasing glucose from the inhibitory cellobiose. This is Probable beta-glucosidase D (bglD) from Aspergillus niger (strain ATCC MYA-4892 / CBS 513.88 / FGSC A1513).